The sequence spans 321 residues: tRNA-5-methyluridine(54) 2-sulfurtransferase (321 aa).

Residues Cys-3, Cys-6, Cys-22, and His-25 each contribute to the Zn(2+) site. Residues 53–55 (AVS), Asp-59, and Ile-79 each bind ATP. [4Fe-4S] cluster contacts are provided by Cys-130 and Cys-133. Lys-137 is covalently cross-linked (Glycyl lysine isopeptide (Lys-Gly) (interchain with G-Cter in TtuB)). ATP-binding residues include Gly-156 and Asp-161. Cys-222 serves as a coordination point for [4Fe-4S] cluster. Glycyl lysine isopeptide (Lys-Gly) (interchain with G-Cter in TtuB) cross-links involve residues Lys-226 and Lys-229. The Zn(2+) site is built by Cys-274, Cys-277, Cys-286, and Cys-289.

It belongs to the TtcA family. TtuA subfamily. In terms of assembly, homodimer. Is able to form a heterocomplex with TtuB. Requires [4Fe-4S] cluster as cofactor. The cofactor is Mg(2+). Post-translationally, conjugated to TtuB via covalent linkages involving Lys-137, Lys-226 and Lys-229.

It carries out the reaction [TtuB sulfur-carrier protein]-C-terminal-Gly-aminoethanethioate + 5-methyluridine(54) in tRNA + ATP + H2O = [TtuB sulfur-carrier protein]-C-terminal Gly-Gly + 5-methyl-2-thiouridine(54) in tRNA + AMP + diphosphate + H(+). It participates in tRNA modification. Its activity is regulated as follows. Enzymatic activity may be regulated by TtuB conjugation. Functionally, catalyzes the ATP-dependent 2-thiolation of 5-methyluridine residue at position 54 in the T loop of tRNAs, leading to 5-methyl-2-thiouridine (m(5)s(2)U or s(2)T). This modification allows thermal stabilization of tRNAs in thermophilic microorganisms, and is required for cell growth at high temperatures. TtuA transfers the S atom from the thiocarboxylated C-terminus of TtuB to tRNA. This chain is tRNA-5-methyluridine(54) 2-sulfurtransferase, found in Thermus thermophilus (strain ATCC BAA-163 / DSM 7039 / HB27).